The chain runs to 57 residues: Enolase (57 aa).

Residue Glu25 is the Proton donor of the active site.

This sequence belongs to the enolase family. Mg(2+) serves as cofactor.

The protein localises to the cytoplasm. It localises to the secreted. The protein resides in the cell surface. It catalyses the reaction (2R)-2-phosphoglycerate = phosphoenolpyruvate + H2O. It functions in the pathway carbohydrate degradation; glycolysis; pyruvate from D-glyceraldehyde 3-phosphate: step 4/5. Its function is as follows. Catalyzes the reversible conversion of 2-phosphoglycerate (2-PG) into phosphoenolpyruvate (PEP). It is essential for the degradation of carbohydrates via glycolysis. The chain is Enolase from Clostridioides difficile (Peptoclostridium difficile).